We begin with the raw amino-acid sequence, 247 residues long: Submandibular gland secretory Glx-rich protein CB (247 aa).

A signal peptide spans 1 to 18 (MLVVLLTAALLALSSAQG). The interval 14–219 (SSAQGTDEEV…PQHYRGRPPK (206 aa)) is disordered. Low complexity-rich tracts occupy residues 39 to 50 (PVDSGSDPPSAD), 58 to 71 (EGESAPPANEEPPA), 81 to 93 (QQEPTQAENQEPP), 104 to 116 (QQEPTQAENQEPP), 126 to 139 (QQQQPTQAENQEPP), 150 to 159 (QQESTQAENQ), and 178 to 196 (VESPPSSPENSQEQPQQTN). 5 tandem repeats follow at residues 67-89 (EEPPATSGSEEEQQQQEPTQAEN), 90-112 (QEPPATSGSEEEQQQQEPTQAEN), 113-135 (QEPPATSGSEEEQQQQQPTQAEN), 136-158 (QEPPATSGSEEEQQQQESTQAEN), and 159-181 (QEPSDSAGEGQETQPEEGNVESP). The segment at 67–181 (EEPPATSGSE…QPEEGNVESP (115 aa)) is 5 X 23 AA tandem repeats. Positions 197–212 (PEEKPPAPKTQEEPQH) are enriched in basic and acidic residues.

As to expression, submandibular gland acinar cells.

It is found in the secreted. In terms of biological role, GRP proteins have a marked affinity for hydroxyapatite. They may play a role in the formation of the protective acquired pellicle at the saliva-tooth interface. The sequence is that of Submandibular gland secretory Glx-rich protein CB (Grpcb) from Rattus norvegicus (Rat).